The chain runs to 93 residues: Small ribosomal subunit protein uS19 (93 aa).

It belongs to the universal ribosomal protein uS19 family.

Functionally, protein S19 forms a complex with S13 that binds strongly to the 16S ribosomal RNA. The sequence is that of Small ribosomal subunit protein uS19 from Micrococcus luteus (strain ATCC 4698 / DSM 20030 / JCM 1464 / CCM 169 / CCUG 5858 / IAM 1056 / NBRC 3333 / NCIMB 9278 / NCTC 2665 / VKM Ac-2230) (Micrococcus lysodeikticus).